Consider the following 500-residue polypeptide: MGQKTNPISLRLQNVNRNFDSCWYSDYFYAKCFSRDLYLNNYINTFFKLYRLPQARVCVNFGIQNIKVYPFFCIPKASRVSLAKNLGLFQHLSKAWNSSPKYFVSSKSKQLSQLKINDASLPVNNLNNNLFFNSSKHNEIRNKQNFFHNLELNKLNLSFKNSAYSDVKNYSFLENISAKLLLNFKEKSVINEVYYTTTNLGQIGNNISTNSIYSKQDMSDNSSKSLLKMLLREYYKSSDNKSSILYENKSPKSLENIFGKINEVSNINKKNLYLLNSETDNIPNLYKRKSKPTKFLRNEHNKVIEDKKTSLYFMPDSNQIKNDIYQGKISKISSISNNSKDSLTDYNLHLYQAYLHNILGNSKSLVSRNQFKYKNYIENFLSSQYNIDSQLFPFISKQNWQSAGFIADEIVYFIERRVSFSRIKNRILRQASMQSYVRGIRITCSGRVGGKSKKAQRATQECVKYGETSLHVFECKIDFASRIANTSFGLVGIKVWICFK.

It belongs to the universal ribosomal protein uS3 family.

It is found in the mitochondrion. This Prototheca wickerhamii protein is Small ribosomal subunit protein uS3m (RPS3).